The chain runs to 281 residues: 2-dehydro-3-deoxyphosphooctonate aldolase (281 aa).

This sequence belongs to the KdsA family.

It localises to the cytoplasm. The enzyme catalyses D-arabinose 5-phosphate + phosphoenolpyruvate + H2O = 3-deoxy-alpha-D-manno-2-octulosonate-8-phosphate + phosphate. The protein operates within carbohydrate biosynthesis; 3-deoxy-D-manno-octulosonate biosynthesis; 3-deoxy-D-manno-octulosonate from D-ribulose 5-phosphate: step 2/3. It functions in the pathway bacterial outer membrane biogenesis; lipopolysaccharide biosynthesis. This chain is 2-dehydro-3-deoxyphosphooctonate aldolase, found in Hahella chejuensis (strain KCTC 2396).